Here is a 26-residue protein sequence, read N- to C-terminus: Maculatin-3.1 (26 aa).

An Alanine amide modification is found at A26.

Expressed by the skin dorsal glands.

Its subcellular location is the secreted. Functionally, shows antibacterial activity against S.uberis. This chain is Maculatin-3.1, found in Ranoidea genimaculata (Brown-spotted tree frog).